A 207-amino-acid chain; its full sequence is Guanylate kinase (207 aa).

In terms of domain architecture, Guanylate kinase-like spans 6–185 (GLLIVLSGPS…AKNRIQCIVE (180 aa)). Residue 13–20 (GPSGVGKG) coordinates ATP.

It belongs to the guanylate kinase family.

The protein resides in the cytoplasm. The enzyme catalyses GMP + ATP = GDP + ADP. Its function is as follows. Essential for recycling GMP and indirectly, cGMP. The protein is Guanylate kinase of Staphylococcus aureus (strain Mu50 / ATCC 700699).